The chain runs to 34 residues: U10-ctenitoxin-Pr1a (34 aa).

4 disulfide bridges follow: Cys2–Cys15, Cys9–Cys20, Cys14–Cys31, and Cys22–Cys29.

As to expression, expressed by the venom gland.

Its subcellular location is the secreted. In terms of biological role, non-toxic to mice and insects. The sequence is that of U10-ctenitoxin-Pr1a from Phoneutria reidyi (Brazilian Amazonian armed spider).